We begin with the raw amino-acid sequence, 74 residues long: Sec-independent protein translocase protein TatA (74 aa).

A helical transmembrane segment spans residues 1-21 (MGGISIWNLVIIVLLVVLLFG). The tract at residues 51–74 (AEFEKVEQKTAESTEQKAKEKEQA) is disordered.

The protein belongs to the TatA/E family. The Tat system comprises two distinct complexes: a TatABC complex, containing multiple copies of TatA, TatB and TatC subunits, and a separate TatA complex, containing only TatA subunits. Substrates initially bind to the TatABC complex, which probably triggers association of the separate TatA complex to form the active translocon.

It is found in the cell inner membrane. Its function is as follows. Part of the twin-arginine translocation (Tat) system that transports large folded proteins containing a characteristic twin-arginine motif in their signal peptide across membranes. TatA could form the protein-conducting channel of the Tat system. The sequence is that of Sec-independent protein translocase protein TatA from Glaesserella parasuis serovar 5 (strain SH0165) (Haemophilus parasuis).